The sequence spans 224 residues: Thymidine kinase (224 aa).

ATP-binding positions include Gly19 to Thr26 and Asp93 to Gln96. Glu94 functions as the Proton acceptor in the catalytic mechanism. Residues Cys150, Cys153, Cys188, and His191 each contribute to the Zn(2+) site.

This sequence belongs to the thymidine kinase family. As to quaternary structure, homotetramer.

The protein resides in the cytoplasm. The catalysed reaction is thymidine + ATP = dTMP + ADP + H(+). This Mycoplasmoides gallisepticum (strain R(low / passage 15 / clone 2)) (Mycoplasma gallisepticum) protein is Thymidine kinase.